The sequence spans 1281 residues: Tubulin polyglutamylase TTLL5 (1281 aa).

One can recognise a TTL domain in the interval 62 to 407 (RYHLSYKIVR…VCQDPAQRAS (346 aa)). ATP-binding positions include K180, 186 to 187 (RG), 208 to 211 (SRYI), and 221 to 223 (KFD). R186 provides a ligand contact to a protein. R247 provides a ligand contact to L-glutamate. 268–269 (TN) contributes to the ATP binding site. Y270, S271, and K293 together coordinate L-glutamate. Mg(2+)-binding residues include D353, E366, and N368. The tract at residues 378–488 (PLDLKIKASM…RGGFIRIFPT (111 aa)) is c-MTBD region. An L-glutamate-binding site is contributed by K384. 3 disordered regions span residues 577 to 614 (MNVKTETESEEEEEVALDNEDEEQEASQEESAGFLREN), 1072 to 1114 (SASA…LQTG), and 1199 to 1281 (SSAT…HTKI). The span at 584-604 (ESEEEEEVALDNEDEEQEASQ) shows a compositional bias: acidic residues. 4 stretches are compositionally biased toward polar residues: residues 1086 to 1113 (SGPTWSTQSDPQAPENHSSSPGSRSLQT), 1199 to 1212 (SSATASGQKPTTLP), 1240 to 1263 (ATSQKASKGSSAEGQLNGLQSSLN), and 1270 to 1281 (ITSSTDPAHTKI).

Belongs to the tubulin--tyrosine ligase family. As to quaternary structure, interacts with the transcriptional coactivators NCOA1/SRC-1 and NCOA2/TIF2. Requires Mg(2+) as cofactor. In terms of tissue distribution, expressed in the retina, found in the rod and cone photoreceptors (at protein level). Widely expressed with highest levels in heart and skeletal muscle and low levels in other tissues.

The protein localises to the cell projection. The protein resides in the cilium. Its subcellular location is the cytoplasm. It localises to the cytoskeleton. It is found in the cilium basal body. The protein localises to the nucleus. It carries out the reaction L-glutamyl-[protein] + L-glutamate + ATP = gamma-L-glutamyl-L-glutamyl-[protein] + ADP + phosphate + H(+). The catalysed reaction is (L-glutamyl)(n)-gamma-L-glutamyl-L-glutamyl-[protein] + L-glutamate + ATP = (L-glutamyl)(n+1)-gamma-L-glutamyl-L-glutamyl-[protein] + ADP + phosphate + H(+). Its function is as follows. Polyglutamylase which modifies tubulin, generating polyglutamate side chains on the gamma-carboxyl group of specific glutamate residues within the C-terminal tail of tubulin. Preferentially mediates ATP-dependent initiation step of the polyglutamylation reaction over the elongation step. Preferentially modifies the alpha-tubulin tail over a beta-tail. Required for CCSAP localization to both polyglutamylated spindle and cilia microtubules. Increases the effects of transcriptional coactivator NCOA2/TIF2 in glucocorticoid receptor-mediated repression and induction and in androgen receptor-mediated induction. The polypeptide is Tubulin polyglutamylase TTLL5 (Homo sapiens (Human)).